Here is a 301-residue protein sequence, read N- to C-terminus: Transposase InsD for insertion element IS2D (301 aa).

The region spanning 106–289 (KPAVPPSKRA…SPREYLRQRA (184 aa)) is the Integrase catalytic domain.

In terms of biological role, involved in the transposition of the insertion sequence IS2. The polypeptide is Transposase InsD for insertion element IS2D (insD2) (Escherichia coli (strain K12)).